Here is a 157-residue protein sequence, read N- to C-terminus: Crossover junction endodeoxyribonuclease RuvC (157 aa).

Catalysis depends on residues Asp-7, Glu-66, and Asp-139. 3 residues coordinate Mg(2+): Asp-7, Glu-66, and Asp-139.

The protein belongs to the RuvC family. As to quaternary structure, homodimer which binds Holliday junction (HJ) DNA. The HJ becomes 2-fold symmetrical on binding to RuvC with unstacked arms; it has a different conformation from HJ DNA in complex with RuvA. In the full resolvosome a probable DNA-RuvA(4)-RuvB(12)-RuvC(2) complex forms which resolves the HJ. Requires Mg(2+) as cofactor.

It localises to the cytoplasm. The enzyme catalyses Endonucleolytic cleavage at a junction such as a reciprocal single-stranded crossover between two homologous DNA duplexes (Holliday junction).. Functionally, the RuvA-RuvB-RuvC complex processes Holliday junction (HJ) DNA during genetic recombination and DNA repair. Endonuclease that resolves HJ intermediates. Cleaves cruciform DNA by making single-stranded nicks across the HJ at symmetrical positions within the homologous arms, yielding a 5'-phosphate and a 3'-hydroxyl group; requires a central core of homology in the junction. The consensus cleavage sequence is 5'-(A/T)TT(C/G)-3'. Cleavage occurs on the 3'-side of the TT dinucleotide at the point of strand exchange. HJ branch migration catalyzed by RuvA-RuvB allows RuvC to scan DNA until it finds its consensus sequence, where it cleaves and resolves the cruciform DNA. This is Crossover junction endodeoxyribonuclease RuvC from Campylobacter concisus (strain 13826).